The following is a 482-amino-acid chain: Regulator of nonsense transcripts UPF3 (482 aa).

The interval 9 to 14 is binds to UPF2; that stretch reads KVVVRH. The tract at residues 9-219 is necessary for interaction with UPF2; the sequence is KVVVRHLPPS…EKESSKNVPR (211 aa). Residues 53 to 482 are sufficient for association with EJC core; sequence YSRAYVSFKA…MWIQKPSSGT (430 aa). A disordered region spans residues 173-482; that stretch reads PQGLSDIRRG…MWIQKPSSGT (310 aa). The segment covering 201-214 has biased composition (basic and acidic residues); the sequence is RNSEKKKYVEKESS. Composition is skewed to polar residues over residues 223-239, 292-308, and 325-336; these read ADVS…NSSG, DTNL…NQKS, and RPSQSSTFVQSE. Basic and acidic residues-rich tracts occupy residues 337–348 and 370–394; these read QRVEPSEAENYK and EKQE…RDGS. Positions 414-435 are enriched in polar residues; it reads SQRSGEVVNSSGGHTLENGSAR.

This sequence belongs to the RENT3 family. In terms of assembly, found in a post-splicing messenger ribonucleoprotein (mRNP) complex. Associates with the exon junction complex (EJC). Interacts with CPL1/FRY2.

It localises to the nucleus. The protein localises to the nucleolus. The protein resides in the cytoplasm. Functionally, recruits UPF2 at the cytoplasmic side of the nuclear envelope and the subsequent formation of an UPF1-UPF2-UPF3 surveillance complex (including UPF1 bound to release factors at the stalled ribosome) is believed to activate NMD. Binds spliced mRNA upstream of exon-exon junctions. Involved in nonsense-mediated decay (NMD) of mRNAs containing premature stop codons (premature termination codon PTC) by associating with the nuclear exon junction complex (EJC) and serving as link between the EJC core and NMD machinery. Eliminates the production of nonsense-containing RNAs (ncRNAs). Required for plant development and adaptation to environmental stresses, including plant defense and response to wounding. The chain is Regulator of nonsense transcripts UPF3 from Arabidopsis thaliana (Mouse-ear cress).